The primary structure comprises 213 residues: ER lumen protein-retaining receptor erd-2.1 (213 aa).

Residues 1–2 (MN) lie on the Lumenal side of the membrane. Residues 3 to 21 (LFRFTADVAHAIAIVVLLL) form a helical membrane-spanning segment. At 22–35 (KIWKSRSCEGISGR) the chain is on the cytoplasmic side. A helical membrane pass occupies residues 36-53 (SQLLFALVFVTRYLDLFT). The Lumenal segment spans residues 54–61 (NFFSFYNT). A helical membrane pass occupies residues 62–80 (AMKIFYLVASFGTVYLMWA). The Cytoplasmic segment spans residues 81–96 (KFKATYDRNNDSFRIE). A helical transmembrane segment spans residues 97–110 (FLVIPSMILALLIN). Over 111–117 (HEFIFME) the chain is Lumenal. The chain crosses the membrane as a helical span at residues 118 to 137 (VMWTFSIYLEAVAIMPQLFM). Over 138–149 (LSRTGNAETITA) the chain is Cytoplasmic. A helical transmembrane segment spans residues 150–168 (HYLFALGSYRFLYILNWVY). Over 169-178 (RYYTESFFDP) the chain is Lumenal. A helical transmembrane segment spans residues 179–199 (ISVVAGIVQTVLYADFFYLYI). The Cytoplasmic portion of the chain corresponds to 200–213 (TRVIQSNRQFEMSA).

Belongs to the ERD2 family.

The protein localises to the endoplasmic reticulum membrane. Its function is as follows. Required for the retention of luminal endoplasmic reticulum proteins. Determines the specificity of the luminal ER protein retention system. Also required for normal vesicular traffic through the Golgi. This Caenorhabditis elegans protein is ER lumen protein-retaining receptor erd-2.1.